The primary structure comprises 292 residues: N-acetylneuraminate lyase (292 aa).

2 residues coordinate aceneuramate: S47 and T48. The active-site Proton donor is the Y136. The active-site Schiff-base intermediate with substrate is K164. The aceneuramate site is built by T166, G188, D190, E191, and S207.

Belongs to the DapA family. NanA subfamily. In terms of assembly, homotetramer.

It localises to the cytoplasm. It catalyses the reaction aceneuramate = aldehydo-N-acetyl-D-mannosamine + pyruvate. It functions in the pathway amino-sugar metabolism; N-acetylneuraminate degradation; D-fructose 6-phosphate from N-acetylneuraminate: step 1/5. Its function is as follows. Catalyzes the reversible aldol cleavage of N-acetylneuraminic acid (sialic acid; Neu5Ac) to form pyruvate and N-acetylmannosamine (ManNAc) via a Schiff base intermediate. This Histophilus somni (strain 129Pt) (Haemophilus somnus) protein is N-acetylneuraminate lyase.